The following is a 352-amino-acid chain: Protein MGF 360-9L (352 aa).

Belongs to the asfivirus MGF 360 family. As to quaternary structure, interacts with host STAT1; this interaction mediates STAT1 degradation through apoptosis. Interacts with host STAT2; this interaction mediates STAT2 degradation through the proteasome.

The protein resides in the host cytoplasm. Its function is as follows. Plays a role in virus cell tropism, and may be required for efficient virus replication in macrophages. In addition, inhibits IFN-beta-induced IFN-stimulated genes (ISGs) transcription. Mechanistically, degrades host STAT1 and STAT2 through apoptosis and ubiquitin-proteasome pathways respectively. The polypeptide is Protein MGF 360-9L (Ornithodoros (relapsing fever ticks)).